Consider the following 501-residue polypeptide: L-arabinose isomerase (501 aa).

Positions 306, 333, 350, and 450 each coordinate Mn(2+).

The protein belongs to the arabinose isomerase family. Homohexamer. Mn(2+) is required as a cofactor.

The catalysed reaction is beta-L-arabinopyranose = L-ribulose. Its pathway is carbohydrate degradation; L-arabinose degradation via L-ribulose; D-xylulose 5-phosphate from L-arabinose (bacterial route): step 1/3. Its function is as follows. Catalyzes the conversion of L-arabinose to L-ribulose. This chain is L-arabinose isomerase, found in Erwinia tasmaniensis (strain DSM 17950 / CFBP 7177 / CIP 109463 / NCPPB 4357 / Et1/99).